Here is a 608-residue protein sequence, read N- to C-terminus: Glutamine--fructose-6-phosphate aminotransferase [isomerizing] (608 aa).

The Nucleophile; for GATase activity role is filled by Cys-2. The Glutamine amidotransferase type-2 domain maps to 2–217; the sequence is CGIVGILGRE…DGDWVVLTRN (216 aa). SIS domains are found at residues 284–423 and 456–598; these read LPFD…ARGE and LARE…VDQP. The active-site For Fru-6P isomerization activity is Lys-603.

As to quaternary structure, homodimer.

It is found in the cytoplasm. It catalyses the reaction D-fructose 6-phosphate + L-glutamine = D-glucosamine 6-phosphate + L-glutamate. Functionally, catalyzes the first step in hexosamine metabolism, converting fructose-6P into glucosamine-6P using glutamine as a nitrogen source. In Bradyrhizobium diazoefficiens (strain JCM 10833 / BCRC 13528 / IAM 13628 / NBRC 14792 / USDA 110), this protein is Glutamine--fructose-6-phosphate aminotransferase [isomerizing] (glmS).